Reading from the N-terminus, the 275-residue chain is Polyamine aminopropyltransferase (275 aa).

The PABS domain occupies 2–235 (HLWFTEKQND…AMWSFTIGSK (234 aa)). Residue Q31 participates in S-methyl-5'-thioadenosine binding. Positions 62 and 86 each coordinate spermidine. S-methyl-5'-thioadenosine-binding positions include E106 and 137–138 (DG). The active-site Proton acceptor is D155. 155 to 158 (DSTD) is a spermidine binding site. P162 is an S-methyl-5'-thioadenosine binding site.

The protein belongs to the spermidine/spermine synthase family. Homodimer or homotetramer.

Its subcellular location is the cytoplasm. It carries out the reaction S-adenosyl 3-(methylsulfanyl)propylamine + putrescine = S-methyl-5'-thioadenosine + spermidine + H(+). The protein operates within amine and polyamine biosynthesis; spermidine biosynthesis; spermidine from putrescine: step 1/1. Functionally, catalyzes the irreversible transfer of a propylamine group from the amino donor S-adenosylmethioninamine (decarboxy-AdoMet) to putrescine (1,4-diaminobutane) to yield spermidine. This Desulforudis audaxviator (strain MP104C) protein is Polyamine aminopropyltransferase.